A 304-amino-acid chain; its full sequence is Phosphatidylinositol mannoside acyltransferase (304 aa).

His126 functions as the Proton acceptor in the catalytic mechanism. 2 residues coordinate hexadecanoyl-CoA: His126 and Arg164. The active site involves Glu200. Positions 206 and 229 each coordinate hexadecanoyl-CoA.

This sequence belongs to the LpxL/LpxM/LpxP family. In terms of assembly, monomer.

The protein resides in the cell inner membrane. The catalysed reaction is a 2,6-O-bis(alpha-D-mannopyranosyl)-1-phosphatidyl-1D-myo-inositol + an acyl-CoA = a 2-O-(alpha-D-mannosyl)-6-O-(6-O-acyl-alpha-D-mannosyl)-1-phosphatidyl-1D-myo-inositol + CoA. It carries out the reaction a 1,2-diacyl-sn-glycero-3-phospho-[alpha-D-mannopyranosyl-(1&lt;-&gt;6)-D-myo-inositol] + an acyl-CoA = a 1,2-diacyl-sn-glycero-3-phospho-[alpha-D-6-acyl-mannopyranosyl-(1&lt;-&gt;6)-D-myo-inositol] + CoA. It participates in phospholipid metabolism; phosphatidylinositol metabolism. Catalyzes the transfer of a palmitoyl moiety from palmitoyl-CoA to the 6-position of the mannose ring linked to the 2-position of myo-inositol in phosphatidyl-myo-inositol monomannoside (PIM1) or dimannoside (PIM2). The protein is Phosphatidylinositol mannoside acyltransferase of Mycolicibacterium smegmatis (strain ATCC 700084 / mc(2)155) (Mycobacterium smegmatis).